A 273-amino-acid chain; its full sequence is Ribonuclease Z (273 aa).

Zn(2+) contacts are provided by His61, His63, His146, Asp169, and His233.

It belongs to the RNase Z family. Homodimer. The cofactor is Zn(2+).

It catalyses the reaction Endonucleolytic cleavage of RNA, removing extra 3' nucleotides from tRNA precursor, generating 3' termini of tRNAs. A 3'-hydroxy group is left at the tRNA terminus and a 5'-phosphoryl group is left at the trailer molecule.. Zinc phosphodiesterase, which displays some tRNA 3'-processing endonuclease activity. Probably involved in tRNA maturation, by removing a 3'-trailer from precursor tRNA. This Mycobacterium tuberculosis (strain ATCC 25177 / H37Ra) protein is Ribonuclease Z.